We begin with the raw amino-acid sequence, 1879 residues long: MILKSFILGNLVSLCMKIINSVVVVGLYYGFLTTFSIGPSYLFLLRAWLMEEGTEKKVSATTGFITGQLMMFISIYYAPLHLALGRPYTITVLALPYLLFHFFWTNPKHFFYYGSTTRNSMRNLSIQCVFLNNLIFQLFNHFILPSSMLVRLVNISMFRCNNKMLFVTSSFVGWLIGHILFMKSVGLILVWIQQNNSIISKKYIRSNKYLVSELRNSIAPIFSIILFITWVYYLGRIPSPIPLKETSKTSETAETEESEEETDVEIETTSETKGTKQEQEGSTEEDTSPSLFSEEKEDPDKIDETEEIRIDKKEKYLFGFEKPLGIILFDYKRWNRPFRYIKNDKFDNAVRKEMSQYFFYTCQSDGKDRIVFTYPPSVATFFELIEKKISLFSTEKLFYDEFDNPWKSLNEQKKRILNKIVITRILLLDKGSPTLVGDVLQKRTQLCICNDETKKEYLPKIYDPFLSGPYRRRINLLLGFSMLNETSRKNDSENIWTNKIHAIIRNNNNGFFDGVTIPYKANASDQNSIDLTEISKKVPRWSYKLIKEIEQVYDITDGELVLDYQIRSRKCKRVVILSDLNKIKKISTSTPTSTPTSTPTSTSTPTSTPTSTPTSTPTSTSTSTPASIPASTSTSIPASTSTSTSTSIPASTSTSTSIPASTSTSIPASTSTSTSTSTSIPASTSTSTNEIKSKDEPKDEPMEQAIIRYAKQWDFRREIIKGSMRAQRRKMGIYQLFQGANSYLFLDRHNFFFSDFCIYIPRLMEKLDRLRIRTNTELPISNNGEEKTREDLKNEKNQESINLKEEKHIQIAELWESIRFGQLVRGSLLITQAFLRKYIILPSVIIAANLTRILLLSPPHFFEDFKNWKKEIYVKCTYNAIPLAENEFPQNWLTDGIQIKILFPFRLQSWHRSKKIEKKDFCFLTVFGTETEQPFGSAENPFLFFKSDLIELREFIKKKKQQLKKWRTKYFRIFLRLRKKVFRKINIAKEKWVIKPILFIKKRIREFWQRNPILLLQLKEIYKLTEAKKENNSIISNGMIQSSSGSIDSIILSLRERKMKELTDRINTMLKIIEKMKKDRQKELLNTKINISPNKMSYYDKIFESQKNILKILKKRNVRFIRKSYKFLKFFVQNIYIDIFQGIINMSRINGQDSKITKSFFNNEANQERIDKPNQSIIISTIKKLLSNITNKNVKNQNLKMFWDVSYLSQAYLFYKLSQTKIINLSKLRPVFQYHGTSRFLKNEIQDYFVEVVGAHEILHSDLKQKKQKNLENSGMINPWKNWLRGHYNFDLYPIRWSKLLSQKWRNRVKQDRKNKDFNQCDSYEKKGLIDYKKQNPFETHYSLPTKKKKKYIYDSLSYKSINYEDNKDSYIYELPVQVKNNQESCYKYNKDKCKFFDILTDLPIDKYLVKNNYLVKANIRDLEKTMDRKYFDWRMLHFSIKNKGDIRVWRHNESDTNSKKNTQNGVKNFELIQKINKKIIKKIKKKELFYLTINQDKKSNPSNNKKQIFFDWMRMSEKKISRYRSNSNPKWFFPKFLILYNAYKIKPWMIPIKSLLFDLNENEIFSKKKLIEKKNGNKAKKESVAKEGVDSVLSNHTKNLQKDSAGADVKKGIKKKQSKKKIEGKLGVLRTGHFRFQLNWPNPEISKSLFMNLNGFSFMLRRLDLKKLSLAAIRNNEFSLEFLLPPSDDITFHELLEKGIFIIEPVRLSLKNDGKFIMSQTIGISLVQKNKYQLNQRYQEKGYPYKRSFAESIAIHQKRTENRTSNHYDLLVPENILSPRGRREFRILICFNSGNKNDIHRNTAFDDGNKVKTDDQVLDKRSKHLDRYQNQLKNLKLFLWPNYRLEDLACMNRYWFDTNNSSRFSMLRIHMYPQLKIR.

Transmembrane regions (helical) follow at residues 18 to 38, 64 to 84, 87 to 107, 124 to 144, 172 to 192, and 218 to 238; these read IINSVVVVGLYYGFLTTFSIG, FITGQLMMFISIYYAPLHLAL, PYTITVLALPYLLFHFFWTNP, LSIQCVFLNNLIFQLFNHFIL, VGWLIGHILFMKSVGLILVWI, and IAPIFSIILFITWVYYLGRIP. Disordered stretches follow at residues 245-305 and 586-702; these read ETSK…IDET and ISTS…DEPM. Acidic residues-rich tracts occupy residues 253–268 and 295–305; these read AETEESEEETDVEIET and EKEDPDKIDET. Residues 586-688 show a composition bias toward low complexity; that stretch reads ISTSTPTSTP…SIPASTSTST (103 aa). The span at 691-701 shows a compositional bias: basic and acidic residues; it reads IKSKDEPKDEP.

It belongs to the TIC214 family. Part of the Tic complex.

It localises to the plastid. It is found in the chloroplast inner membrane. Involved in protein precursor import into chloroplasts. May be part of an intermediate translocation complex acting as a protein-conducting channel at the inner envelope. This Cucumis sativus (Cucumber) protein is Protein TIC 214.